Here is a 411-residue protein sequence, read N- to C-terminus: Serine hydroxymethyltransferase (411 aa).

(6S)-5,6,7,8-tetrahydrofolate is bound by residues L119 and 123–125; that span reads GHL. N6-(pyridoxal phosphate)lysine is present on K228. 351–353 provides a ligand contact to (6S)-5,6,7,8-tetrahydrofolate; that stretch reads SPF.

It belongs to the SHMT family. As to quaternary structure, homodimer. Pyridoxal 5'-phosphate is required as a cofactor.

It is found in the cytoplasm. The catalysed reaction is (6R)-5,10-methylene-5,6,7,8-tetrahydrofolate + glycine + H2O = (6S)-5,6,7,8-tetrahydrofolate + L-serine. It functions in the pathway one-carbon metabolism; tetrahydrofolate interconversion. It participates in amino-acid biosynthesis; glycine biosynthesis; glycine from L-serine: step 1/1. Its function is as follows. Catalyzes the reversible interconversion of serine and glycine with tetrahydrofolate (THF) serving as the one-carbon carrier. This reaction serves as the major source of one-carbon groups required for the biosynthesis of purines, thymidylate, methionine, and other important biomolecules. Also exhibits THF-independent aldolase activity toward beta-hydroxyamino acids, producing glycine and aldehydes, via a retro-aldol mechanism. In Clostridium botulinum (strain Alaska E43 / Type E3), this protein is Serine hydroxymethyltransferase.